The primary structure comprises 380 residues: Cytochrome b (380 aa).

The next 4 helical transmembrane spans lie at phenylalanine 33–methionine 53, tryptophan 77–valine 98, tryptophan 113–leucine 133, and phenylalanine 178–leucine 198. 2 residues coordinate heme b: histidine 83 and histidine 97. The heme b site is built by histidine 182 and histidine 196. Histidine 201 is a binding site for a ubiquinone. Transmembrane regions (helical) follow at residues tyrosine 226 to serine 246, leucine 288 to histidine 308, phenylalanine 320 to glycine 340, and phenylalanine 347 to proline 367.

The protein belongs to the cytochrome b family. The cytochrome bc1 complex contains 3 respiratory subunits (MT-CYB, CYC1 and UQCRFS1), 2 core proteins (UQCRC1 and UQCRC2) and probably 6 low-molecular weight proteins. Requires heme b as cofactor.

The protein localises to the mitochondrion inner membrane. In terms of biological role, component of the ubiquinol-cytochrome c reductase complex (complex III or cytochrome b-c1 complex) that is part of the mitochondrial respiratory chain. The b-c1 complex mediates electron transfer from ubiquinol to cytochrome c. Contributes to the generation of a proton gradient across the mitochondrial membrane that is then used for ATP synthesis. This chain is Cytochrome b (mt-cyb), found in Arapaima gigas (Arapaima).